A 172-amino-acid chain; its full sequence is Translation initiation factor IF-3 (172 aa).

It belongs to the IF-3 family. In terms of assembly, monomer.

The protein resides in the cytoplasm. Functionally, IF-3 binds to the 30S ribosomal subunit and shifts the equilibrium between 70S ribosomes and their 50S and 30S subunits in favor of the free subunits, thus enhancing the availability of 30S subunits on which protein synthesis initiation begins. This is Translation initiation factor IF-3 from Campylobacter jejuni subsp. jejuni serotype O:6 (strain 81116 / NCTC 11828).